Here is a 525-residue protein sequence, read N- to C-terminus: Nucleolar and spindle-associated protein 1-C (525 aa).

Disordered regions lie at residues 43–203, 250–293, 373–398, and 452–525; these read FYPE…KKLH, TPVS…FSAA, TPES…EKAK, and LSRP…VPVQ. The segment covering 58 to 69 has biased composition (polar residues); that stretch reads SSLTDTDELNSS. Over residues 82-92 the composition is skewed to basic residues; the sequence is THRRGRGRKPL. A compositionally biased stretch (basic and acidic residues) spans 93–102; it reads KNHDTPKDEF. The segment covering 113-127 has biased composition (polar residues); that stretch reads SLASETDNTQHQNCL. Residues 160 to 169 are compositionally biased toward basic and acidic residues; the sequence is TTEKRQKKAS. A compositionally biased stretch (polar residues) spans 270–285; it reads PPTTGASPSRTPTNQR. The segment covering 476 to 494 has biased composition (polar residues); it reads CGSNNNVSVLKNNFKQPHL. Residues 495-514 are compositionally biased toward basic and acidic residues; the sequence is QTREDRRKQHEQDRKGKRDQ.

It belongs to the NUSAP family. In terms of assembly, interacts with DNA, microtubules, ipo7, kpna2 and kpnb1. Microtubule stabilization is inhibited by ipo7 and kpna2, while microtubule bundling is inhibited by kpnb1. Active GTP-bound ran causes dissociation of ipo7 and kpnb1.

Its subcellular location is the cytoplasm. It localises to the nucleus. The protein resides in the cytoskeleton. It is found in the spindle. Microtubule-associated protein with the capacity to bundle and stabilize microtubules. May associate with chromosomes and promote the organization of meiotic or mitotic spindle microtubules around them. In Xenopus laevis (African clawed frog), this protein is Nucleolar and spindle-associated protein 1-C (nusap1-c).